Reading from the N-terminus, the 95-residue chain is Small ubiquitin-related modifier 2-A (95 aa).

A Glycyl lysine isopeptide (Lys-Gly) (interchain with G-Cter in SUMO) cross-link involves residue Lys11. The 80-residue stretch at 16–95 (DHINLKVAGQ…VFQQQTGGSF (80 aa)) folds into the Ubiquitin-like domain. Residue Gly93 forms a Glycyl lysine isopeptide (Gly-Lys) (interchain with K-? in acceptor proteins) linkage. The propeptide occupies 94 to 95 (SF).

It belongs to the ubiquitin family. SUMO subfamily. Interacts with sae2 and ube2i. Covalently attached to a number of proteins, including top2. Polymeric chains can be formed through Lys-11 cross-linking. Post-translationally, cleavage of precursor form by a sentrin-specific protease is necessary for function.

It localises to the nucleus. Ubiquitin-like protein that can be covalently attached to proteins as a monomer or as a lysine-linked polymer. Covalent attachment via an isopeptide bond to its substrates requires prior activation by the E1 complex sae1-sae2 and linkage to the E2 enzyme ube2i, and can be promoted by an E3 ligase such as pias1-4. This post-translational modification on lysine residues of proteins plays a crucial role in a number of cellular processes such as nuclear transport, DNA replication and repair, mitosis and signal transduction. Polymeric sumo2 chains are also susceptible to polyubiquitination which functions as a signal for proteasomal degradation of modified proteins. The protein is Small ubiquitin-related modifier 2-A (sumo2-a) of Xenopus laevis (African clawed frog).